The sequence spans 188 residues: Peptide deformylase (188 aa).

Residues Cys-94 and His-136 each coordinate Fe cation. Glu-137 is a catalytic residue. His-140 is a binding site for Fe cation.

It belongs to the polypeptide deformylase family. It depends on Fe(2+) as a cofactor.

The enzyme catalyses N-terminal N-formyl-L-methionyl-[peptide] + H2O = N-terminal L-methionyl-[peptide] + formate. Removes the formyl group from the N-terminal Met of newly synthesized proteins. Requires at least a dipeptide for an efficient rate of reaction. N-terminal L-methionine is a prerequisite for activity but the enzyme has broad specificity at other positions. This Pelodictyon phaeoclathratiforme (strain DSM 5477 / BU-1) protein is Peptide deformylase.